We begin with the raw amino-acid sequence, 322 residues long: Mas-related G-protein coupled receptor member X3 (322 aa).

Over 1–31 (MDPTIPALGTSQTPINRREETPCYKQTLSLT) the chain is Extracellular. A helical transmembrane segment spans residues 32–52 (VLTCIISLVGLTGNAVVLWLL). At 53–60 (GFRMRRNA) the chain is on the cytoplasmic side. Residues 61–81 (VSTYILNLAAVDFLFLSGHIV) form a helical membrane-spanning segment. Topologically, residues 82 to 96 (RSPLRLISIRHPISK) are extracellular. Residues 97 to 117 (IVNPVMTFPYFIGLSMLSAIS) form a helical membrane-spanning segment. Over 118–139 (TERCLSVLWPMWYRCRRPRHLS) the chain is Cytoplasmic. Residues 140–160 (VVVCVLLWALSLLRSILEWMF) form a helical membrane-spanning segment. The Extracellular segment spans residues 161-177 (CDFLFSGADSVWCETSD). A helical membrane pass occupies residues 178-198 (FITIAWLIFLCVVLCGSSLVL). Over 199 to 213 (LVRILCGSRKMPLTR) the chain is Cytoplasmic. A helical membrane pass occupies residues 214–234 (LYVTILLTVLVFLLCGLPFGI). Residues 235-254 (QWALFSRIHLDWKVLFCHVH) lie on the Extracellular side of the membrane. Residues 255-275 (LISVFLSSLNSSANPIIYFFV) form a helical membrane-spanning segment. Residues 276–322 (GSFRQRQNRQNLKLVLQRALQDTPEVDEGGGRLPEETLELSVSRLEQ) lie on the Cytoplasmic side of the membrane.

This sequence belongs to the G-protein coupled receptor 1 family. Mas subfamily.

It localises to the cell membrane. Orphan receptor. Probably involved in the function of nociceptive neurons. May regulate nociceptor function and/or development, including the sensation or modulation of pain. Potently activated by enkephalins. In Macaca mulatta (Rhesus macaque), this protein is Mas-related G-protein coupled receptor member X3 (MRGPRX3).